Here is a 357-residue protein sequence, read N- to C-terminus: Glutamine synthetase root isozyme 1 (357 aa).

The GS beta-grasp domain maps to 19 to 99; sequence IIAEYIWIGG…VMCDCYTPQG (81 aa). Residues 106–357 form the GS catalytic domain; the sequence is KRYSAAKVFS…AETTILWNGN (252 aa).

Belongs to the glutamine synthetase family. As to quaternary structure, homooctamer. As to expression, found mainly in the cortical tissues of seedling roots, and in the root tip.

It is found in the cytoplasm. The catalysed reaction is L-glutamate + NH4(+) + ATP = L-glutamine + ADP + phosphate + H(+). Functionally, plays a role in the flow of nitrogen into nitrogenous organic compounds. This Zea mays (Maize) protein is Glutamine synthetase root isozyme 1 (GLN6).